Consider the following 243-residue polypeptide: Probable transcriptional regulatory protein TTE1135 (243 aa).

This sequence belongs to the TACO1 family.

The protein resides in the cytoplasm. In Caldanaerobacter subterraneus subsp. tengcongensis (strain DSM 15242 / JCM 11007 / NBRC 100824 / MB4) (Thermoanaerobacter tengcongensis), this protein is Probable transcriptional regulatory protein TTE1135.